A 246-amino-acid chain; its full sequence is tRNA (guanine-N(7)-)-methyltransferase (246 aa).

The tract at residues 1–26 (MSDSSSSSENAPATPESPGRPPRGIK) is disordered. Residues glutamate 74, glutamate 99, aspartate 126, and aspartate 149 each coordinate S-adenosyl-L-methionine. Aspartate 149 is a catalytic residue. Substrate is bound by residues lysine 153, aspartate 185, and 224–227 (TKFE).

The protein belongs to the class I-like SAM-binding methyltransferase superfamily. TrmB family.

It carries out the reaction guanosine(46) in tRNA + S-adenosyl-L-methionine = N(7)-methylguanosine(46) in tRNA + S-adenosyl-L-homocysteine. Its pathway is tRNA modification; N(7)-methylguanine-tRNA biosynthesis. Its function is as follows. Catalyzes the formation of N(7)-methylguanine at position 46 (m7G46) in tRNA. In Chromohalobacter salexigens (strain ATCC BAA-138 / DSM 3043 / CIP 106854 / NCIMB 13768 / 1H11), this protein is tRNA (guanine-N(7)-)-methyltransferase.